The following is a 426-amino-acid chain: Endoglucanase Z (426 aa).

An N-terminal signal peptide occupies residues 1-43 (MPLSYLDKNPVIDSKKHALRKKLFLSCAYFGLSLACLSSNAWA). Positions 44-332 (SVEPLSVNGN…VKSIIQSWPY (289 aa)) are catalytic. E176 acts as the Proton donor in catalysis. E263 serves as the catalytic Nucleophile. The segment at 333–366 (KAGSAASATTDPSTDTTTDTTVDEPTTTDTPATA) is linker. The tract at residues 336–367 (SAASATTDPSTDTTTDTTVDEPTTTDTPATAD) is disordered. Residues 367–426 (DCANANVYPNWVSKDWAGGQPTHNEAGQSIVYKGNLYTANWYTASVPGSDSSWTQVGSCN) form a cellulose-binding region. An intrachain disulfide couples C368 to C425.

The protein belongs to the glycosyl hydrolase 5 (cellulase A) family.

Its subcellular location is the secreted. The enzyme catalyses Endohydrolysis of (1-&gt;4)-beta-D-glucosidic linkages in cellulose, lichenin and cereal beta-D-glucans.. In terms of biological role, represents 97% of the global cellulase activity. The polypeptide is Endoglucanase Z (celZ) (Dickeya dadantii (strain 3937) (Erwinia chrysanthemi (strain 3937))).